The chain runs to 169 residues: Disulfide bond formation protein B (169 aa).

At 1–14 (MNNLTLSLRRERRL) the chain is on the cytoplasmic side. A helical transmembrane segment spans residues 15–31 (LVLLALVCLALLAGALY). At 32 to 49 (LQYVKNEDPCPLCIIQRY) the chain is on the periplasmic side. Cys-41 and Cys-44 are oxidised to a cystine. A helical transmembrane segment spans residues 50–64 (FFVLIAVFAFIGAGM). At 65 to 71 (ASGAGVA) the chain is on the cytoplasmic side. The helical transmembrane segment at 72-89 (VTEALIVLSAAAGVGTAA) threads the bilayer. Residues 90–144 (RHLYVQLNPGFSCGFDALQPVVDSLPPARWLPGVFKVAGLCETVYPPIFGILLPG) are Periplasmic-facing. A disulfide bridge connects residues Cys-102 and Cys-130. Residues 145–163 (WALIAFVLIAVPVAVSLLR) traverse the membrane as a helical segment. The Cytoplasmic segment spans residues 164–169 (HRGRLR).

This sequence belongs to the DsbB family.

Its subcellular location is the cell inner membrane. Its function is as follows. Required for disulfide bond formation in some periplasmic proteins. Acts by oxidizing the DsbA protein. This Burkholderia mallei (strain ATCC 23344) protein is Disulfide bond formation protein B.